Reading from the N-terminus, the 65-residue chain is Small ribosomal subunit protein bS21 (65 aa).

Residues 45–65 form a disordered region; it reads GRLKRSRSRRRAQRANEERNS. The segment covering 48-57 has biased composition (basic residues); sequence KRSRSRRRAQ.

This sequence belongs to the bacterial ribosomal protein bS21 family.

The sequence is that of Small ribosomal subunit protein bS21 from Chlorobium phaeobacteroides (strain DSM 266 / SMG 266 / 2430).